The chain runs to 354 residues: MTIQTDDFAPAPPRVVSAAPASPQEEAIERALRPKLLDEYVGQAKVREQLEIFIGAARKRKEALDHVLLFGPPGLGKTTLSHIIAAELGVNLRQTSGPVLEKPKDLAALLTNLEPNDVLFIDEIHRLSPVVEEILYPALEDYQIDIMIGEGPAARSIKLDLQPFTLVGATTRAGMLTNPLRDRFGIVARLEFYTPEELALIVRRSAGLLKVDTDAAGGFEIARRSRGTPRIANRLLRRVRDYAEVKGNGRITEDIAHKALVMLDVDPQGFDLMDRKLLEAVIHRFDGGPVGLDNVAASIGEERDTIEDVIEPYLIQQGYLQRTPRGRIATLAAYRHLGVTPPSSRSDGQDLFGI.

The disordered stretch occupies residues M1–S22. The interval T5 to Y193 is large ATPase domain (RuvB-L). Residues L32, R33, G74, K77, T78, T79, E140–Y142, R183, Y193, and R230 each bind ATP. Residue T78 participates in Mg(2+) binding. The small ATPAse domain (RuvB-S) stretch occupies residues T194–D264. The head domain (RuvB-H) stretch occupies residues P267–I354. DNA is bound by residues R303, R322, and R327.

Belongs to the RuvB family. As to quaternary structure, homohexamer. Forms an RuvA(8)-RuvB(12)-Holliday junction (HJ) complex. HJ DNA is sandwiched between 2 RuvA tetramers; dsDNA enters through RuvA and exits via RuvB. An RuvB hexamer assembles on each DNA strand where it exits the tetramer. Each RuvB hexamer is contacted by two RuvA subunits (via domain III) on 2 adjacent RuvB subunits; this complex drives branch migration. In the full resolvosome a probable DNA-RuvA(4)-RuvB(12)-RuvC(2) complex forms which resolves the HJ.

It is found in the cytoplasm. It carries out the reaction ATP + H2O = ADP + phosphate + H(+). The RuvA-RuvB-RuvC complex processes Holliday junction (HJ) DNA during genetic recombination and DNA repair, while the RuvA-RuvB complex plays an important role in the rescue of blocked DNA replication forks via replication fork reversal (RFR). RuvA specifically binds to HJ cruciform DNA, conferring on it an open structure. The RuvB hexamer acts as an ATP-dependent pump, pulling dsDNA into and through the RuvAB complex. RuvB forms 2 homohexamers on either side of HJ DNA bound by 1 or 2 RuvA tetramers; 4 subunits per hexamer contact DNA at a time. Coordinated motions by a converter formed by DNA-disengaged RuvB subunits stimulates ATP hydrolysis and nucleotide exchange. Immobilization of the converter enables RuvB to convert the ATP-contained energy into a lever motion, pulling 2 nucleotides of DNA out of the RuvA tetramer per ATP hydrolyzed, thus driving DNA branch migration. The RuvB motors rotate together with the DNA substrate, which together with the progressing nucleotide cycle form the mechanistic basis for DNA recombination by continuous HJ branch migration. Branch migration allows RuvC to scan DNA until it finds its consensus sequence, where it cleaves and resolves cruciform DNA. The protein is Holliday junction branch migration complex subunit RuvB of Variovorax paradoxus (strain S110).